The following is a 272-amino-acid chain: Interleukin-2 receptor subunit alpha (272 aa).

The signal sequence occupies residues 1–21 (MDPYLLMWGLLTFITVPGCQA). Residues 22 to 84 (ELCDDDPPKI…SWDNQCQCTS (63 aa)) enclose the Sushi 1 domain. The Extracellular portion of the chain corresponds to 22–240 (ELCDDDPPKI…ETFIFTTEYQ (219 aa)). 3 disulfide bridges follow: C24–C67, C49–C80, and C51–C82. 2 N-linked (GlcNAc...) asparagine glycosylation sites follow: N70 and N89. The span at 87–98 (ARNTTKQVTPQP) shows a compositional bias: polar residues. Residues 87–109 (ARNTTKQVTPQPEEQKERKTTEM) are disordered. The 64-residue stretch at 123–186 (GHCREPPPWE…WTQPQLICTG (64 aa)) folds into the Sushi 2 domain. 2 disulfides stabilise this stretch: C125-C168 and C152-C184. The disordered stretch occupies residues 186–213 (GETEPSQFPGEEEPQASPDGLPESETSR). Residues 241–259 (VAVAGCVFLLISVLLLSGL) traverse the membrane as a helical segment. Over 260 to 272 (TWQRRQRKNRRTI) the chain is Cytoplasmic.

In terms of assembly, non-covalent dimer of an alpha and a beta subunit. IL2R exists in 3 different forms: a high affinity dimer, an intermediate affinity monomer (beta subunit), and a low affinity monomer (alpha subunit). The high and intermediate affinity forms also associate with a gamma subunit.

The protein resides in the membrane. Receptor for interleukin-2. The receptor is involved in the regulation of immune tolerance by controlling regulatory T cells (TREGs) activity. TREGs suppress the activation and expansion of autoreactive T-cells. The protein is Interleukin-2 receptor subunit alpha (IL2RA) of Macaca mulatta (Rhesus macaque).